Reading from the N-terminus, the 371-residue chain is Glycosyltransferase 8 domain-containing protein 1 (371 aa).

The Cytoplasmic portion of the chain corresponds to 1–7 (MSFRKVN). Residues 8–28 (IIIWVLAVVLFLLVLHHNFLS) traverse the membrane as a helical; Signal-anchor for type II membrane protein segment. At 29–371 (LSSLLKNDIS…RRHMDTSNIK (343 aa)) the chain is on the lumenal side. Asn-257 is a glycosylation site (N-linked (GlcNAc...) asparagine).

Belongs to the glycosyltransferase 8 family.

Its subcellular location is the membrane. The chain is Glycosyltransferase 8 domain-containing protein 1 (Glt8d1) from Mus musculus (Mouse).